The primary structure comprises 427 residues: Glutamate-1-semialdehyde 2,1-aminomutase (427 aa).

The residue at position 265 (K265) is an N6-(pyridoxal phosphate)lysine.

Belongs to the class-III pyridoxal-phosphate-dependent aminotransferase family. HemL subfamily. Homodimer. It depends on pyridoxal 5'-phosphate as a cofactor.

The protein localises to the cytoplasm. The catalysed reaction is (S)-4-amino-5-oxopentanoate = 5-aminolevulinate. The protein operates within porphyrin-containing compound metabolism; protoporphyrin-IX biosynthesis; 5-aminolevulinate from L-glutamyl-tRNA(Glu): step 2/2. This chain is Glutamate-1-semialdehyde 2,1-aminomutase, found in Pseudomonas aeruginosa (strain UCBPP-PA14).